Here is a 430-residue protein sequence, read N- to C-terminus: Adenylosuccinate synthetase (430 aa).

Residues 12 to 18 and 40 to 42 contribute to the GTP site; these read GDEGKGK and GHT. Catalysis depends on aspartate 13, which acts as the Proton acceptor. Residues aspartate 13 and glycine 40 each contribute to the Mg(2+) site. IMP contacts are provided by residues 13-16, 38-41, threonine 130, arginine 144, glutamine 224, threonine 239, and arginine 303; these read DEGK and NAGH. The active-site Proton donor is histidine 41. 299-305 contributes to the substrate binding site; it reads TVTGRKR. Residues arginine 305, 331–333, and 413–415 each bind GTP; these read KLD and STS.

The protein belongs to the adenylosuccinate synthetase family. In terms of assembly, homodimer. The cofactor is Mg(2+).

The protein localises to the cytoplasm. It catalyses the reaction IMP + L-aspartate + GTP = N(6)-(1,2-dicarboxyethyl)-AMP + GDP + phosphate + 2 H(+). Its pathway is purine metabolism; AMP biosynthesis via de novo pathway; AMP from IMP: step 1/2. In terms of biological role, plays an important role in the de novo pathway of purine nucleotide biosynthesis. Catalyzes the first committed step in the biosynthesis of AMP from IMP. This Parvibaculum lavamentivorans (strain DS-1 / DSM 13023 / NCIMB 13966) protein is Adenylosuccinate synthetase.